We begin with the raw amino-acid sequence, 308 residues long: Methionyl-tRNA formyltransferase (308 aa).

A (6S)-5,6,7,8-tetrahydrofolate-binding site is contributed by 107–110; that stretch reads SLLP.

The protein belongs to the Fmt family.

It carries out the reaction L-methionyl-tRNA(fMet) + (6R)-10-formyltetrahydrofolate = N-formyl-L-methionyl-tRNA(fMet) + (6S)-5,6,7,8-tetrahydrofolate + H(+). Attaches a formyl group to the free amino group of methionyl-tRNA(fMet). The formyl group appears to play a dual role in the initiator identity of N-formylmethionyl-tRNA by promoting its recognition by IF2 and preventing the misappropriation of this tRNA by the elongation apparatus. This Carboxydothermus hydrogenoformans (strain ATCC BAA-161 / DSM 6008 / Z-2901) protein is Methionyl-tRNA formyltransferase.